The chain runs to 173 residues: Crossover junction endodeoxyribonuclease RuvC (173 aa).

Residues aspartate 8, glutamate 67, and aspartate 139 contribute to the active site. Positions 8, 67, and 139 each coordinate Mg(2+).

It belongs to the RuvC family. Homodimer which binds Holliday junction (HJ) DNA. The HJ becomes 2-fold symmetrical on binding to RuvC with unstacked arms; it has a different conformation from HJ DNA in complex with RuvA. In the full resolvosome a probable DNA-RuvA(4)-RuvB(12)-RuvC(2) complex forms which resolves the HJ. Mg(2+) serves as cofactor.

The protein resides in the cytoplasm. The enzyme catalyses Endonucleolytic cleavage at a junction such as a reciprocal single-stranded crossover between two homologous DNA duplexes (Holliday junction).. In terms of biological role, the RuvA-RuvB-RuvC complex processes Holliday junction (HJ) DNA during genetic recombination and DNA repair. Endonuclease that resolves HJ intermediates. Cleaves cruciform DNA by making single-stranded nicks across the HJ at symmetrical positions within the homologous arms, yielding a 5'-phosphate and a 3'-hydroxyl group; requires a central core of homology in the junction. The consensus cleavage sequence is 5'-(A/T)TT(C/G)-3'. Cleavage occurs on the 3'-side of the TT dinucleotide at the point of strand exchange. HJ branch migration catalyzed by RuvA-RuvB allows RuvC to scan DNA until it finds its consensus sequence, where it cleaves and resolves the cruciform DNA. The sequence is that of Crossover junction endodeoxyribonuclease RuvC from Shewanella piezotolerans (strain WP3 / JCM 13877).